The primary structure comprises 476 residues: RuvB-like helicase 2 (476 aa).

72-80 (VGPPSTGKT) provides a ligand contact to ATP.

The protein belongs to the RuvB family. In terms of assembly, may form heterododecamers with RVB1. Component of the SWR1 chromatin remodeling complex, the INO80 chromatin remodeling complex, and of the R2TP complex.

It is found in the nucleus. The enzyme catalyses ATP + H2O = ADP + phosphate + H(+). Its function is as follows. DNA helicase which participates in several chromatin remodeling complexes, including the SWR1 and the INO80 complexes. The SWR1 complex mediates the ATP-dependent exchange of histone H2A for the H2A variant HZT1 leading to transcriptional regulation of selected genes by chromatin remodeling. The INO80 complex remodels chromatin by shifting nucleosomes and is involved in DNA repair. Also involved in pre-rRNA processing. The protein is RuvB-like helicase 2 (RVB2) of Mycosarcoma maydis (Corn smut fungus).